The primary structure comprises 100 residues: Large ribosomal subunit protein bL21 (100 aa).

Belongs to the bacterial ribosomal protein bL21 family. Part of the 50S ribosomal subunit. Contacts proteins L15 and L20.

Its function is as follows. Binds directly to 23S rRNA, probably serving to organize its structure. The sequence is that of Large ribosomal subunit protein bL21 from Deinococcus radiodurans (strain ATCC 13939 / DSM 20539 / JCM 16871 / CCUG 27074 / LMG 4051 / NBRC 15346 / NCIMB 9279 / VKM B-1422 / R1).